The following is a 502-amino-acid chain: Probable RNA exonuclease C9B6.11c (502 aa).

Residues 338–379 (SELEEKNASTKTENDSNEDDKEECQSSSTSSVPESTASTPKK) are disordered. Over residues 341–351 (EEKNASTKTEN) the composition is skewed to basic and acidic residues. The span at 363-376 (SSSTSSVPESTAST) shows a compositional bias: low complexity.

The protein belongs to the CCR4/nocturin family.

It is found in the cytoplasm. It localises to the nucleus. The protein is Probable RNA exonuclease C9B6.11c of Schizosaccharomyces pombe (strain 972 / ATCC 24843) (Fission yeast).